The sequence spans 466 residues: Ribulose bisphosphate carboxylase large chain (466 aa).

Lys-5 is modified (N6,N6,N6-trimethyllysine). Substrate-binding residues include Asn-114 and Thr-164. Residue Lys-166 is the Proton acceptor of the active site. Position 168 (Lys-168) interacts with substrate. Positions 192, 194, and 195 each coordinate Mg(2+). N6-carboxylysine is present on Lys-192. The Proton acceptor role is filled by His-285. Positions 286, 318, and 370 each coordinate substrate.

It belongs to the RuBisCO large chain family. Type I subfamily. As to quaternary structure, heterohexadecamer of 8 large chains and 8 small chains; disulfide-linked. The disulfide link is formed within the large subunit homodimers. The cofactor is Mg(2+). In terms of processing, the disulfide bond which can form in the large chain dimeric partners within the hexadecamer appears to be associated with oxidative stress and protein turnover.

Its subcellular location is the plastid. The protein resides in the chloroplast. The catalysed reaction is 2 (2R)-3-phosphoglycerate + 2 H(+) = D-ribulose 1,5-bisphosphate + CO2 + H2O. It catalyses the reaction D-ribulose 1,5-bisphosphate + O2 = 2-phosphoglycolate + (2R)-3-phosphoglycerate + 2 H(+). Functionally, ruBisCO catalyzes two reactions: the carboxylation of D-ribulose 1,5-bisphosphate, the primary event in carbon dioxide fixation, as well as the oxidative fragmentation of the pentose substrate in the photorespiration process. Both reactions occur simultaneously and in competition at the same active site. In Tropaeolum majus (Common nasturtium), this protein is Ribulose bisphosphate carboxylase large chain.